A 191-amino-acid polypeptide reads, in one-letter code: UPF0312 protein Sputw3181_1309 (191 aa).

The first 22 residues, 1-22 (MKKQLLSALIGVSLLVPMAASA), serve as a signal peptide directing secretion.

The protein belongs to the UPF0312 family. Type 1 subfamily.

The protein localises to the periplasm. The protein is UPF0312 protein Sputw3181_1309 of Shewanella sp. (strain W3-18-1).